The primary structure comprises 193 residues: Ion-translocating oxidoreductase complex subunit A (193 aa).

6 consecutive transmembrane segments (helical) span residues 5-25, 47-67, 72-92, 102-122, 134-154, and 171-191; these read LLLF…FLGL, FVMT…LVPL, LRTL…EMVV, LLGI…VALL, AVYG…FAAI, and SIAL…TGLV.

The protein belongs to the NqrDE/RnfAE family. The complex is composed of six subunits: RnfA, RnfB, RnfC, RnfD, RnfE and RnfG.

It localises to the cell inner membrane. Functionally, part of a membrane-bound complex that couples electron transfer with translocation of ions across the membrane. The chain is Ion-translocating oxidoreductase complex subunit A from Serratia proteamaculans (strain 568).